Consider the following 106-residue polypeptide: Pyrimidine/purine nucleoside phosphorylase (106 aa).

The protein belongs to the nucleoside phosphorylase PpnP family.

It catalyses the reaction a purine D-ribonucleoside + phosphate = a purine nucleobase + alpha-D-ribose 1-phosphate. The catalysed reaction is adenosine + phosphate = alpha-D-ribose 1-phosphate + adenine. It carries out the reaction cytidine + phosphate = cytosine + alpha-D-ribose 1-phosphate. The enzyme catalyses guanosine + phosphate = alpha-D-ribose 1-phosphate + guanine. It catalyses the reaction inosine + phosphate = alpha-D-ribose 1-phosphate + hypoxanthine. The catalysed reaction is thymidine + phosphate = 2-deoxy-alpha-D-ribose 1-phosphate + thymine. It carries out the reaction uridine + phosphate = alpha-D-ribose 1-phosphate + uracil. The enzyme catalyses xanthosine + phosphate = alpha-D-ribose 1-phosphate + xanthine. Its function is as follows. Catalyzes the phosphorolysis of diverse nucleosides, yielding D-ribose 1-phosphate and the respective free bases. Can use uridine, adenosine, guanosine, cytidine, thymidine, inosine and xanthosine as substrates. Also catalyzes the reverse reactions. The sequence is that of Pyrimidine/purine nucleoside phosphorylase from Burkholderia multivorans (strain ATCC 17616 / 249).